The sequence spans 671 residues: UvrABC system protein B (671 aa).

One can recognise a Helicase ATP-binding domain in the interval 25-178; sequence EGIKKGYKHQ…DAMLKKLVEI (154 aa). Position 38 to 45 (38 to 45) interacts with ATP; sequence GVTGSGKT. The Beta-hairpin motif lies at 91 to 114; that stretch reads YYDYYQPEAYIPETDTYIEKDALI. Positions 435 to 601 constitute a Helicase C-terminal domain; it reads QVEDLLEEIH…TVKSKIKDIL (167 aa). In terms of domain architecture, UVR spans 626–661; the sequence is EETIKKLEQEMKHAAENLEFEKAAEIRDKIFKIKEK.

The protein belongs to the UvrB family. As to quaternary structure, forms a heterotetramer with UvrA during the search for lesions. Interacts with UvrC in an incision complex.

The protein resides in the cytoplasm. In terms of biological role, the UvrABC repair system catalyzes the recognition and processing of DNA lesions. A damage recognition complex composed of 2 UvrA and 2 UvrB subunits scans DNA for abnormalities. Upon binding of the UvrA(2)B(2) complex to a putative damaged site, the DNA wraps around one UvrB monomer. DNA wrap is dependent on ATP binding by UvrB and probably causes local melting of the DNA helix, facilitating insertion of UvrB beta-hairpin between the DNA strands. Then UvrB probes one DNA strand for the presence of a lesion. If a lesion is found the UvrA subunits dissociate and the UvrB-DNA preincision complex is formed. This complex is subsequently bound by UvrC and the second UvrB is released. If no lesion is found, the DNA wraps around the other UvrB subunit that will check the other stand for damage. The chain is UvrABC system protein B from Thermodesulfovibrio yellowstonii (strain ATCC 51303 / DSM 11347 / YP87).